Consider the following 102-residue polypeptide: Small ribosomal subunit protein uS10 (102 aa).

It belongs to the universal ribosomal protein uS10 family. In terms of assembly, part of the 30S ribosomal subunit.

In terms of biological role, involved in the binding of tRNA to the ribosomes. The sequence is that of Small ribosomal subunit protein uS10 from Bifidobacterium longum (strain DJO10A).